A 93-amino-acid chain; its full sequence is Small ribosomal subunit protein uS19 (93 aa).

This sequence belongs to the universal ribosomal protein uS19 family.

Protein S19 forms a complex with S13 that binds strongly to the 16S ribosomal RNA. The chain is Small ribosomal subunit protein uS19 (rpsS) from Helicobacter pylori (strain ATCC 700392 / 26695) (Campylobacter pylori).